The primary structure comprises 237 residues: MYNSNLLVIQKLLSTNAYLGHRIPTSDFQGYLYGFRNEMAIIDLEKTLICLRRTCNLIGSIISAKGHLLLVNTNPEYNKIIQQMAKKTNQSYINHKWIGGFLTNWKHMKKVKKHFQDFSAHPNLKDAFTSSPFDYFPRFKKMQKCFEGIMTHNIPDCLVIINANQNSMAILEANQLQIPIVALVDSNIPNRLHKLITYPVPVNDDSIKFVYLFCNLITKTVILSKRSQRPKVKVKRL.

The protein belongs to the universal ribosomal protein uS2 family.

It is found in the mitochondrion. This Marchantia polymorpha (Common liverwort) protein is Small ribosomal subunit protein uS2m (RPS2).